A 238-amino-acid chain; its full sequence is Orotidine 5'-phosphate decarboxylase (238 aa).

Substrate-binding positions include Asp10, Lys32, 59 to 68 (DLKLHDIPNT), Thr122, Arg184, Gln193, Gly213, and Arg214. Lys61 serves as the catalytic Proton donor.

It belongs to the OMP decarboxylase family. Type 1 subfamily. As to quaternary structure, homodimer.

It carries out the reaction orotidine 5'-phosphate + H(+) = UMP + CO2. The protein operates within pyrimidine metabolism; UMP biosynthesis via de novo pathway; UMP from orotate: step 2/2. Catalyzes the decarboxylation of orotidine 5'-monophosphate (OMP) to uridine 5'-monophosphate (UMP). This is Orotidine 5'-phosphate decarboxylase from Bacillus cereus (strain AH820).